The chain runs to 61 residues: Antimicrobial peptide 1 (61 aa).

The first 24 residues, 1-24 (LPVAFLKFAIVLILFIAMSAMIEA), serve as a signal peptide directing secretion. Gln-25 bears the Pyrrolidone carboxylic acid mark. 3 disulfides stabilise this stretch: Cys-26–Cys-43, Cys-33–Cys-47, and Cys-42–Cys-58.

This sequence belongs to the AMP family. In terms of assembly, homodimer. In terms of processing, three disulfide bonds are present. As to expression, found only in seeds.

Its subcellular location is the secreted. Its function is as follows. Possesses antifungal activity and is also active on two tested Gram-positive bacteria but is non-toxic for Gram-negative bacteria and cultured human cells. This is Antimicrobial peptide 1 (AMP1) from Mirabilis jalapa (Garden four-o'clock).